Reading from the N-terminus, the 70-residue chain is DNA gyrase inhibitor YacG (70 aa).

Over residues 1–15 (MPEDKKAAAKVEPLR) the composition is skewed to basic and acidic residues. Residues 1–22 (MPEDKKAAAKVEPLRKTRPCPE) form a disordered region. 4 residues coordinate Zn(2+): C20, C23, C35, and C39.

The protein belongs to the DNA gyrase inhibitor YacG family. Interacts with GyrB. The cofactor is Zn(2+).

Its function is as follows. Inhibits all the catalytic activities of DNA gyrase by preventing its interaction with DNA. Acts by binding directly to the C-terminal domain of GyrB, which probably disrupts DNA binding by the gyrase. The chain is DNA gyrase inhibitor YacG from Rhizobium johnstonii (strain DSM 114642 / LMG 32736 / 3841) (Rhizobium leguminosarum bv. viciae).